We begin with the raw amino-acid sequence, 407 residues long: Protoasukamycin 4-monooxygenase (407 aa).

In terms of assembly, does not interact with AsuE2, suggesting a possible transient interaction between the two enzymes instead of formation of a stable complex. It depends on FMN as a cofactor. The cofactor is FAD. Requires riboflavin as cofactor.

The enzyme catalyses protoasukamycin + NADH + O2 + H(+) = 4-hydroxyprotoasukamycin + NAD(+) + H2O. It functions in the pathway antibiotic biosynthesis. Its activity is regulated as follows. When flavin concentration is low, activity is enhanced by the presence of the NADH-dependent flavin reductase AsuE2. In the presence of abundant flavin, activity of AsuE1 is not affected by AsuE2. Functionally, involved in the biosynthesis of the antibiotic asukamycin. Catalyzes the conversion of protoasukamycin to 4-hydroxyprotoasukamycin. Can also convert some protoasukamycin derivatives into their corresponding 4-hydroxyprotoasukamycin derivatives. Can also use NADPH, but catalytic efficiency is 50-fold higher with NADH. The chain is Protoasukamycin 4-monooxygenase from Streptomyces nodosus subsp. asukaensis.